The primary structure comprises 377 residues: Pseudouridylate synthase RPUSD4, mitochondrial (377 aa).

The N-terminal 35 residues, methionine 1–alanine 35, are a transit peptide targeting the mitochondrion. Residue aspartate 153 is part of the active site.

This sequence belongs to the pseudouridine synthase RluA family. In terms of assembly, interacts with 16S mt-rRNA, mt-tRNA(Phe) and mt-tRNA(Met). Forms a regulatory protein-RNA complex, consisting of RCC1L, NGRN, RPUSD3, RPUSD4, TRUB2, FASTKD2 and 16S mt-rRNA.

The protein localises to the mitochondrion matrix. It is found in the nucleus. It localises to the cytoplasm. It catalyses the reaction uridine in 5S rRNA = pseudouridine in 5S rRNA. The enzyme catalyses a uridine in tRNA = a pseudouridine in tRNA. The catalysed reaction is a uridine in mRNA = a pseudouridine in mRNA. Its function is as follows. Catalyzes uridine to pseudouridine isomerization (pseudouridylation) of different mitochondrial RNA substrates. Acts on position 1397 in 16S mitochondrial ribosomal RNA (16S mt-rRNA). This modification is required for the assembly of 16S mt-rRNA into a functional mitochondrial ribosome. As a component of a functional protein-RNA module, consisting of RCC1L, NGRN, RPUSD3, RPUSD4, TRUB2, FASTKD2 and 16S mt-rRNA, controls 16S mt-rRNA abundance and is required for intra-mitochondrial translation. Acts on position 39 in mitochondrial tRNA(Phe). Also catalyzes pseudouridylation of mRNAs in nucleus: acts as a regulator of pre-mRNA splicing by mediating pseudouridylation of pre-mRNAs at locations associated with alternatively spliced regions. Pseudouridylation of pre-mRNAs near splice sites directly regulates mRNA splicing and mRNA 3'-end processing. This is Pseudouridylate synthase RPUSD4, mitochondrial from Rattus norvegicus (Rat).